Here is a 374-residue protein sequence, read N- to C-terminus: MAHEILIAETEAFLKNVAPETRTAIISAITGGKSACKSAAKLIKNEHLPLMSGEATTMHIVMRCLYPEIKPWKKASDMLNKATSSLKKSEGRDIRKQMKAAGDFLGVESMMKMRAFRDDQIMEMVEEVYDHPDDYTPDIRIGTITAWLRCKNKKSERYRSNVSESGRTALKIHEVRKASTAMNEIAGITGLGEEALSLQRQTESLAILCNHTFGSNIMRPHLEKAIKGVEGRVGEMGRMAMKWLVVIICFSITSQPASACNLKTCLKLFNNTDAVTVHCFNENQGYMLTLASLGLGIITMLYLLVKIIIELVNGFVLGRWERWCGDIKTTIMPEIDSMEKDIALSRERLDLGEDAPDETDNSPIPFSNDGIFEI.

The Cytoplasmic segment spans residues 1–238; that stretch reads MAHEILIAET…VEGRVGEMGR (238 aa). Residues 239 to 259 form a helical; Signal-anchor for type II membrane protein membrane-spanning segment; it reads MAMKWLVVIICFSITSQPASA. The Extracellular segment spans residues 260-288; the sequence is CNLKTCLKLFNNTDAVTVHCFNENQGYML. Asn270 carries N-linked (GlcNAc...) asparagine; by host glycosylation. A helical membrane pass occupies residues 289 to 309; the sequence is TLASLGLGIITMLYLLVKIII. The Cytoplasmic portion of the chain corresponds to 310 to 374; the sequence is ELVNGFVLGR…PFSNDGIFEI (65 aa). Residue Cys324 is the site of S-palmitoyl cysteine; by host attachment. Residues Ser337 and Ser362 each carry the phosphoserine; by host modification.

It belongs to the influenza C protein M1 family. Homodimer; disulfide-linked. Homotetramer; disulfide-linked. Palmitoylated. In terms of processing, N-glycosylated. Post-translationally, ser-337 is the major site of phosphorylation, Ser-362 being a minor one.

It localises to the host endoplasmic reticulum membrane. Its subcellular location is the virion membrane. The protein resides in the host cell membrane. Functionally, ion channel, which might have a role in genome packaging and uncoating processes. The polypeptide is Polyprotein p42 (M) (Influenza C virus (strain C/Ann Arbor/1/1950)).